We begin with the raw amino-acid sequence, 875 residues long: Lysine-specific demethylase JMJ26 (875 aa).

Residues 31–103 (KPVEATSLSS…RSSVKKRATT (73 aa)) form a disordered region. Residues 62–69 (RKRSKADE) carry the Nuclear localization signal motif. Residues 79–93 (KCDDENKCEENEKKQ) are compositionally biased toward basic and acidic residues. The Zn(2+) site is built by C193, C196, C207, C210, C216, C219, C236, C239, C322, C325, C339, and C347. The RING-type; degenerate zinc finger occupies 193 to 240 (CHQCSKGERRYLFICTFCEVRLYCFPCIKKWYPHLSTDDILEKCPFCR). The B box-type; degenerate zinc-finger motif lies at 317 to 347 (EERVFCNHCATSIVDLHRSCPKCSYELCLNC). A JmjC domain is found at 614–837 (PRSGILNIAT…ECLRLTDEFR (224 aa)). The Fe cation site is built by H658, D660, and H805.

This sequence belongs to the JARID1 histone demethylase family. Fe(2+) serves as cofactor. Expressed in inflorescences, roots, siliques, leaves and stems.

The protein resides in the nucleus. May function as histone H3 lysine demethylase and be involved in regulation of gene expression. The sequence is that of Lysine-specific demethylase JMJ26 from Arabidopsis thaliana (Mouse-ear cress).